A 393-amino-acid polypeptide reads, in one-letter code: GDP-mannose:cellobiosyl-diphosphopolyprenol alpha-mannosyltransferase (393 aa).

The protein belongs to the glycosyltransferase group 1 family. Glycosyltransferase 4 subfamily.

It carries out the reaction beta-D-Glc-(1-&gt;4)-alpha-D-Glc-di-trans,octa-cis-undecaprenyl diphosphate + GDP-alpha-D-mannose = alpha-D-Man-(1-&gt;3)-beta-D-Glc-(1-&gt;4)-alpha-D-Glc-1-di-trans,octa-cis-undecaprenyl diphosphate + GDP + H(+). In terms of biological role, involved in the biosynthesis of the exopolysaccharide acetan, a water-soluble polysaccharide involved in production of bacterial cellulose (BC). This Komagataeibacter xylinus (Gluconacetobacter xylinus) protein is GDP-mannose:cellobiosyl-diphosphopolyprenol alpha-mannosyltransferase (aceC).